The following is a 427-amino-acid chain: UPF0229 protein KPN78578_11640 (427 aa).

Positions 72 to 109 (RNRVHPGNDHFVQNDRIERPQGGGGGGGSGQGQASADG) are disordered. Positions 77–90 (PGNDHFVQNDRIER) are enriched in basic and acidic residues. Gly residues predominate over residues 92 to 102 (QGGGGGGGSGQ).

It belongs to the UPF0229 family.

The chain is UPF0229 protein KPN78578_11640 from Klebsiella pneumoniae subsp. pneumoniae (strain ATCC 700721 / MGH 78578).